The following is a 137-amino-acid chain: Ribonuclease P protein component (137 aa).

The protein belongs to the RnpA family. As to quaternary structure, consists of a catalytic RNA component (M1 or rnpB) and a protein subunit.

It catalyses the reaction Endonucleolytic cleavage of RNA, removing 5'-extranucleotides from tRNA precursor.. RNaseP catalyzes the removal of the 5'-leader sequence from pre-tRNA to produce the mature 5'-terminus. It can also cleave other RNA substrates such as 4.5S RNA. The protein component plays an auxiliary but essential role in vivo by binding to the 5'-leader sequence and broadening the substrate specificity of the ribozyme. This is Ribonuclease P protein component from Porphyromonas gingivalis (strain ATCC BAA-308 / W83).